The sequence spans 440 residues: tRNA-2-methylthio-N(6)-dimethylallyladenosine synthase (440 aa).

The MTTase N-terminal domain occupies 2-117; it reads KGLYIKTYGC…LPELIVKASR (116 aa). 6 residues coordinate [4Fe-4S] cluster: cysteine 11, cysteine 47, cysteine 80, cysteine 157, cysteine 161, and cysteine 164. The 232-residue stretch at 143-374 folds into the Radical SAM core domain; it reads NSQGSSAFLA…QELISKQQLE (232 aa). The TRAM domain occupies 377-440; sequence QSMIGKTIPV…RQNSLLGCAA (64 aa).

This sequence belongs to the methylthiotransferase family. MiaB subfamily. As to quaternary structure, monomer. The cofactor is [4Fe-4S] cluster.

The protein resides in the cytoplasm. The catalysed reaction is N(6)-dimethylallyladenosine(37) in tRNA + (sulfur carrier)-SH + AH2 + 2 S-adenosyl-L-methionine = 2-methylsulfanyl-N(6)-dimethylallyladenosine(37) in tRNA + (sulfur carrier)-H + 5'-deoxyadenosine + L-methionine + A + S-adenosyl-L-homocysteine + 2 H(+). Catalyzes the methylthiolation of N6-(dimethylallyl)adenosine (i(6)A), leading to the formation of 2-methylthio-N6-(dimethylallyl)adenosine (ms(2)i(6)A) at position 37 in tRNAs that read codons beginning with uridine. In Wolbachia pipientis subsp. Culex pipiens (strain wPip), this protein is tRNA-2-methylthio-N(6)-dimethylallyladenosine synthase.